Here is a 97-residue protein sequence, read N- to C-terminus: Co-chaperonin GroES (97 aa).

It belongs to the GroES chaperonin family. As to quaternary structure, heptamer of 7 subunits arranged in a ring. Interacts with the chaperonin GroEL.

Its subcellular location is the cytoplasm. In terms of biological role, together with the chaperonin GroEL, plays an essential role in assisting protein folding. The GroEL-GroES system forms a nano-cage that allows encapsulation of the non-native substrate proteins and provides a physical environment optimized to promote and accelerate protein folding. GroES binds to the apical surface of the GroEL ring, thereby capping the opening of the GroEL channel. The sequence is that of Co-chaperonin GroES from Buchnera aphidicola subsp. Baizongia pistaciae (strain Bp).